The sequence spans 668 residues: Fructose-1,6-bisphosphatase class 3 (668 aa).

This sequence belongs to the FBPase class 3 family. It depends on Mn(2+) as a cofactor.

It catalyses the reaction beta-D-fructose 1,6-bisphosphate + H2O = beta-D-fructose 6-phosphate + phosphate. It functions in the pathway carbohydrate biosynthesis; gluconeogenesis. This Clostridium botulinum (strain ATCC 19397 / Type A) protein is Fructose-1,6-bisphosphatase class 3.